Here is a 947-residue protein sequence, read N- to C-terminus: Protein translocase subunit SecA 1 (947 aa).

ATP is bound by residues Gln-83, 101–105 (GEGKT), and Asp-490. The tract at residues 860-947 (AKAQEQTGQG…KTSKPTRRRG (88 aa)) is disordered. Over residues 925 to 934 (TRRERREAAR) the composition is skewed to basic and acidic residues. Residues 935-947 (KQAKTSKPTRRRG) are compositionally biased toward basic residues.

The protein belongs to the SecA family. Monomer and homodimer. Part of the essential Sec protein translocation apparatus which comprises SecA, SecYEG and auxiliary proteins SecDF. Other proteins may also be involved.

It is found in the cell membrane. It localises to the cytoplasm. It carries out the reaction ATP + H2O + cellular proteinSide 1 = ADP + phosphate + cellular proteinSide 2.. Part of the Sec protein translocase complex. Interacts with the SecYEG preprotein conducting channel. Has a central role in coupling the hydrolysis of ATP to the transfer of proteins into and across the cell membrane, serving as an ATP-driven molecular motor driving the stepwise translocation of polypeptide chains across the membrane. This Mycobacterium sp. (strain KMS) protein is Protein translocase subunit SecA 1.